The chain runs to 299 residues: Homeobox protein Nkx-2.5 (299 aa).

Residues 90–119 show a composition bias toward basic and acidic residues; sequence KDPKDHKKDICPLQKTLEHDKREAEDPERP. Residues 90 to 128 form a disordered region; the sequence is KDPKDHKKDICPLQKTLEHDKREAEDPERPRQRKRRKPR. The segment at residues 124-183 is a DNA-binding region (homeobox); that stretch reads RRKPRVLFSQAQVYELERRFKQQKYLSAPERDHLANVLKLTSTQVKIWFQNRRYKCKRQR.

It belongs to the NK-2 homeobox family. Homodimer (via the homeobox); binds DNA as homodimer. As to expression, heart and gut tissue.

The protein localises to the nucleus. In terms of biological role, transcription factor required for the development of the heart and the spleen. Implicated in commitment to and/or differentiation of the myocardial lineage. May regulate the expression of genes involved in cardiogenesis and play a role in the formation of gut and the pharyngeal region. Binds to the core DNA motif of promoter. In Xenopus laevis (African clawed frog), this protein is Homeobox protein Nkx-2.5 (nkx-2.5).